Reading from the N-terminus, the 346-residue chain is Elongation factor Ts (346 aa).

Positions 80–83 are involved in Mg(2+) ion dislocation from EF-Tu; that stretch reads TDFV.

This sequence belongs to the EF-Ts family.

It localises to the cytoplasm. In terms of biological role, associates with the EF-Tu.GDP complex and induces the exchange of GDP to GTP. It remains bound to the aminoacyl-tRNA.EF-Tu.GTP complex up to the GTP hydrolysis stage on the ribosome. The protein is Elongation factor Ts of Streptococcus pyogenes serotype M18 (strain MGAS8232).